Here is a 766-residue protein sequence, read N- to C-terminus: MGKKQNNRKVVKSQRKSHREKEEETLAKLQERIDAYDPVVDEKSISQFSDLPISEETARGLKEASFASLTDIQKKTIPISLKGEDVMGTAKTGSGKTLAFLIPTIESLIRNKITEYDGLAALIISPTRELAVQIFEVLVKIGKHNNFSAGLVTGGKDVKYEKERVSKMNILVGTPGRISQHLNESVGMETSNLQVLVLDEADRCLDMGFKKQIDNILGHLPPTRQTLLFSATQSDSVKDLARLSLANPKRVGISSDQELSATPESLEQYYIKIPLDEKLDVLWSFIKSHLKSKILVFFSSSKQVQYAYETFRTLQPGISLLKLYGRHKQTSRMETTMKFSQAQHACLFATDIVARGLDFPAIDWVVQIDCPEDAATYVHRVGRAARFGRAGKSLMMLLPSEENGMLKRLNNNKIELKFMNIKQKNKKTIRPQLQSLCFQDPMIKNLGQRAFISYFRSVYVQKDKDIFKIDELPSDKFARSLGLPGAPKIKFKGGSDNKEKKNMSRQLAALSKSNNEGDVVPEEDKKVRTKYDRMFERKNQTILSDHYLNLTGSKADTAEKSDDDDEDFMAVKRQDHELRDDELPDLSIPVSKRSAKKALSKKASVAGKGNANKLKFDDDGVAHAIYELEDEEDFKKQGDARVQKDTFLNKETELMNNADIEDKLTAKEKRQEKKRKRKEMEKNMRQESDDEDENIQTVVSIGGDDIDLDRDLEHSSADEDVPEPKKPKWFDNDKNVNKDEDDGVVEYDEPQTLEDLEALTSKLLEH.

Basic residues predominate over residues 1-18 (MGKKQNNRKVVKSQRKSH). Residues 1–25 (MGKKQNNRKVVKSQRKSHREKEEET) form a disordered region. The Q motif motif lies at 46-74 (SQFSDLPISEETARGLKEASFASLTDIQK). The Helicase ATP-binding domain maps to 77–251 (IPISLKGEDV…RLSLANPKRV (175 aa)). Residue 90–97 (AKTGSGKT) coordinates ATP. The short motif at 199–202 (DEAD) is the DEAD box element. The region spanning 265 to 437 (SLEQYYIKIP…TIRPQLQSLC (173 aa)) is the Helicase C-terminal domain. Disordered regions lie at residues 488–525 (KIKFKGGSDNKEKKNMSRQLAALSKSNNEGDVVPEEDK), 572–614 (KRQD…ANKL), and 649–752 (NKET…EPQT). 5 stretches are compositionally biased toward basic and acidic residues: residues 493-502 (GGSDNKEKKN), 572-581 (KRQDHELRDD), 660-671 (IEDKLTAKEKRQ), 678-687 (KEMEKNMRQE), and 709-738 (DRDLEHSSADEDVPEPKKPKWFDNDKNVNK). Residues 739–752 (DEDDGVVEYDEPQT) show a composition bias toward acidic residues.

The protein belongs to the DEAD box helicase family. DDX10/DBP4 subfamily. Interacts with the U3 and U14 snoRNAs. Associates with pre-ribosomal complexes.

Its subcellular location is the nucleus. It is found in the nucleolus. The enzyme catalyses ATP + H2O = ADP + phosphate + H(+). Its function is as follows. ATP-dependent RNA helicase required for ribosome biogenesis. Involved in the release of U14 snoRNA in pre-ribosomal complexes. Required for pre-rRNA cleavage at site A2. This Debaryomyces hansenii (strain ATCC 36239 / CBS 767 / BCRC 21394 / JCM 1990 / NBRC 0083 / IGC 2968) (Yeast) protein is ATP-dependent RNA helicase DBP4 (DBP4).